The chain runs to 992 residues: MNSEASVFSNMDWSQLAHSLHKKANNSSSSTTGAFPQLTSFTKPTATNGVDSPTSSHIDPSVSAKLDSQRKLSLKSGNMWDSLNAPSELTSKNPTVSSTTSSANPAIVSNGGSPFYKNPVVANNPSSTFDMSTNLFNSKNANTSFTNAFSNEGISPGFLRDCFPSSNSITTGTASPKLGSPFNHINRPVLDRSPSSFSQSRSAVSGNMNPGVGTLQQPQRAGSDTFPDLNTSSSNQPGGEPNVASANTHSLEILSSSAYHPSGSSNGISAGLTQSVASPVGQVDNLADFSQSPLRRGPSRFPTNSNVPVGNSMSIRDTDSPLNILVDKAKAKASIKENASQPVAPSASQREHSAVNSPAAAMSPSTAMFSSEAFPQHLASLIPPALLHWLYKDPQNNVQGPFTGVDMHQWYRAGYFPLGLPIKRLEEEEYYSLAFFIRQVGNQLEPFLVPLSPVTVQNASWNAQGTDLPLSNYLPESSEQNRGGNKHLELYPSTAEVSNVRNDESKANSLSEISYNQQSECRSSELNVNEDSANQKEESALGTSDNSDMYEKENTPIHHNESLNQLSKDLGSISLSEETKQEKPSKLKETVESKRLSTGVQKQSPAASKEIPVTSGSQTTAPKPSPWKSLPPKHLPSLDETISREMSIASSEALPQVEKSNSDQPPVAIPSTSKTGSPWAKVSDVSTSMAQEIQRMEKQNENLKSKVASNPVSQTSTNAKASTPALASGSIWGSPSVINAWANKPAALKSPLIKKNIQQAELAQNKQQSSVTTASPRSNALNANTPKAAAPSSNVTMKNVTSILETSTFEGEDTWSVVGPGGKIVNQQSPSAQQTTRSPSKVSATLNAGNSQASTSSKLQQVVSMSGHSPDFLAWCKISLKGLNEGVNYEEFLDMLLSLPAENNVETFEIISDSIYANSTIMDGRRFASEFTRRRIADLTGKDGQQSNNKSQSELGNSSGAWSQVVRNKPKQGTEWNSAFKVVTSKKNKKRV.

3 disordered regions span residues 24–105 (ANNS…SANP), 172–245 (GTAS…NVAS), and 289–316 (FSQS…MSIR). Composition is skewed to polar residues over residues 25–58 (NNSS…SSHI) and 75–104 (KSGN…SSAN). Phosphoserine is present on S175. Over residues 193 to 205 (SPSSFSQSRSAVS) the composition is skewed to low complexity. Composition is skewed to polar residues over residues 214 to 237 (TLQQ…SNQP) and 301 to 315 (FPTN…SMSI). A Phosphothreonine modification is found at T318. S320 bears the Phosphoserine mark. Residues 336 to 359 (KENASQPVAPSASQREHSAVNSPA) are disordered. Polar residues predominate over residues 337–348 (ENASQPVAPSAS). A GYF domain is found at 386-434 (LLHWLYKDPQNNVQGPFTGVDMHQWYRAGYFPLGLPIKRLEEEEYYSLA). 8 disordered regions span residues 467 to 486 (DLPL…GGNK), 496 to 563 (EVSN…NESL), 576 to 637 (SEET…HLPS), 651 to 682 (SEAL…WAKV), 697 to 729 (EKQN…LASG), 760 to 794 (AELA…PSSN), 818 to 859 (VGPG…SSKL), and 940 to 992 (TGKD…KKRV). 2 stretches are compositionally biased toward polar residues: residues 474 to 483 (LPESSEQNRG) and 507 to 532 (ANSL…NEDS). Position 509 is a phosphoserine (S509). Basic and acidic residues-rich tracts occupy residues 549 to 561 (MYEK…HHNE) and 577 to 595 (EETK…ESKR). Over residues 596–606 (LSTGVQKQSPA) the composition is skewed to polar residues. Phosphoserine is present on residues S604 and S637. 2 stretches are compositionally biased toward polar residues: residues 658–676 (EKSN…SKTG) and 707–721 (VASN…NAKA). A phosphoserine mark is found at S775, S829, S838, and S840. Composition is skewed to polar residues over residues 825–859 (VNQQ…SSKL) and 943–966 (DGQQ…SQVV).

This sequence belongs to the SMY2/mpd2 family.

The protein localises to the cytoplasm. Functionally, has a role in mRNA export from the nucleus. The chain is GYF domain-containing protein mpd2 (mpd2) from Schizosaccharomyces pombe (strain 972 / ATCC 24843) (Fission yeast).